The primary structure comprises 293 residues: Cep170-like protein (293 aa).

2 disordered regions span residues 78–110 (PPLV…LTIT) and 217–270 (FPSA…AESE). The span at 227 to 245 (KQKSSPVNNHHSPGQTPTL) shows a compositional bias: polar residues.

Belongs to the CEP170 family.

The polypeptide is Cep170-like protein (CEP170P1) (Homo sapiens (Human)).